Consider the following 69-residue polypeptide: Guanine nucleotide-binding protein G(I)/G(S)/G(O) subunit gamma-T2 (69 aa).

Residues 47–69 (DPLLKGIPEDKNPFKEKGGCMIS) are disordered. Residues 53 to 69 (IPEDKNPFKEKGGCMIS) show a composition bias toward basic and acidic residues. Cysteine 66 bears the Cysteine methyl ester mark. Cysteine 66 carries S-farnesyl cysteine lipidation. Residues 67 to 69 (MIS) constitute a propeptide, removed in mature form.

This sequence belongs to the G protein gamma family. As to quaternary structure, g proteins are composed of 3 units, alpha, beta and gamma.

The protein localises to the cell membrane. Its function is as follows. Guanine nucleotide-binding proteins (G proteins) are involved as a modulator or transducer in various transmembrane signaling systems. The beta and gamma chains are required for the GTPase activity, for replacement of GDP by GTP, and for G protein-effector interaction. This chain is Guanine nucleotide-binding protein G(I)/G(S)/G(O) subunit gamma-T2 (GNGT2), found in Canis lupus familiaris (Dog).